Reading from the N-terminus, the 454-residue chain is Maintenance of mitochondrial morphology protein 1 (454 aa).

Topologically, residues 1 to 128 (MSMVIGIGDL…QSSGWGFAHG (128 aa)) are lumenal. Residues 129 to 149 (LLVGQLSVVAVLAFFIKFFIF) form a helical membrane-spanning segment. At 150–454 (GNSSMARPLM…SESETAVDSN (305 aa)) the chain is on the cytoplasmic side. Residues 207–430 (QSESLDWFNV…EPRFQLIELP (224 aa)) enclose the SMP-LTD domain.

Belongs to the MMM1 family. As to quaternary structure, homodimer. Component of the ER-mitochondria encounter structure (ERMES) or MDM complex, composed of MMM1, MDM10, MDM12 and MDM34. An MMM1 homodimer associates with one molecule of MDM12 on each side in a pairwise head-to-tail manner, and the SMP-LTD domains of MMM1 and MDM12 generate a continuous hydrophobic tunnel for phospholipid trafficking.

The protein localises to the endoplasmic reticulum membrane. Functionally, component of the ERMES/MDM complex, which serves as a molecular tether to connect the endoplasmic reticulum (ER) and mitochondria. Components of this complex are involved in the control of mitochondrial shape and protein biogenesis, and function in nonvesicular lipid trafficking between the ER and mitochondria. The MDM12-MMM1 subcomplex functions in the major beta-barrel assembly pathway that is responsible for biogenesis of all outer membrane beta-barrel proteins, and acts in a late step after the SAM complex. The MDM10-MDM12-MMM1 subcomplex further acts in the TOM40-specific pathway after the action of the MDM12-MMM1 complex. Essential for establishing and maintaining the structure of mitochondria and maintenance of mtDNA nucleoids. The chain is Maintenance of mitochondrial morphology protein 1 from Komagataella phaffii (strain GS115 / ATCC 20864) (Yeast).